The sequence spans 365 residues: METKLFSSASLIKPSGTSLLILLTVVLFLLMTLFQWLLTSSLEGIYAVILPVSVSAIACGLLGFGVIPLLRWLKTGQFVREDGPQSHLKKAGTPTMGGIFFIPVAVGVALIGSKFDPQVVAVGIVTLAYMMIGWVDDWQVLRQKSNKGISPKMKLLLQIAVAVLFCLWMLWTGSPNITNLSLPGNLIIPLGWLFWILAIFVLVAESNATNITDGVDGLASGTCAIAFLGLAAIVAPTSVGLMIFCACLSGGCLGFVLHNRNPAKVFMGDTGSLALGGALAAVGLLSGNLWGLFIISGIFFVESLSVIAQVSYYKATKGPDGQGKRLLKMAPLHHHLELSGWSETQIVGVFYLINAGLAILGFISR.

Transmembrane regions (helical) follow at residues 19–39 (LLIL…WLLT), 47–67 (AVIL…FGVI), 91–111 (AGTP…VALI), 115–135 (FDPQ…IGWV), 155–175 (LLLQ…TGSP), 184–204 (GNLI…VLVA), 224–244 (AIAF…LMIF), 281–301 (AVGL…IFFV), and 344–364 (TQIV…GFIS).

It belongs to the glycosyltransferase 4 family. MraY subfamily. Mg(2+) is required as a cofactor.

It localises to the cell inner membrane. The catalysed reaction is UDP-N-acetyl-alpha-D-muramoyl-L-alanyl-gamma-D-glutamyl-meso-2,6-diaminopimeloyl-D-alanyl-D-alanine + di-trans,octa-cis-undecaprenyl phosphate = di-trans,octa-cis-undecaprenyl diphospho-N-acetyl-alpha-D-muramoyl-L-alanyl-D-glutamyl-meso-2,6-diaminopimeloyl-D-alanyl-D-alanine + UMP. It functions in the pathway cell wall biogenesis; peptidoglycan biosynthesis. Its function is as follows. Catalyzes the initial step of the lipid cycle reactions in the biosynthesis of the cell wall peptidoglycan: transfers peptidoglycan precursor phospho-MurNAc-pentapeptide from UDP-MurNAc-pentapeptide onto the lipid carrier undecaprenyl phosphate, yielding undecaprenyl-pyrophosphoryl-MurNAc-pentapeptide, known as lipid I. The sequence is that of Phospho-N-acetylmuramoyl-pentapeptide-transferase from Gloeothece citriformis (strain PCC 7424) (Cyanothece sp. (strain PCC 7424)).